A 161-amino-acid polypeptide reads, in one-letter code: MTHWTIVLATEAVEKTAEGGLFDFDATLPVMAIQFLVLAALLNKLFYKPIGQAIDDRSDYIRTNLVDAKERQQKAEDLAAQYEQELRDVRREAQDVIAKAQAEAQKVVADEVKSAQAEALAEREKAALEIEAQRESAFKSLEQQVDSLSQAIASKLVGAKL.

A helical membrane pass occupies residues 30 to 47 (VMAIQFLVLAALLNKLFY).

The protein belongs to the ATPase B chain family. As to quaternary structure, F-type ATPases have 2 components, F(1) - the catalytic core - and F(0) - the membrane proton channel. F(1) has five subunits: alpha(3), beta(3), gamma(1), delta(1), epsilon(1). F(0) has four main subunits: a(1), b(1), b'(1) and c(10-14). The alpha and beta chains form an alternating ring which encloses part of the gamma chain. F(1) is attached to F(0) by a central stalk formed by the gamma and epsilon chains, while a peripheral stalk is formed by the delta, b and b' chains.

The protein resides in the cellular thylakoid membrane. Functionally, f(1)F(0) ATP synthase produces ATP from ADP in the presence of a proton or sodium gradient. F-type ATPases consist of two structural domains, F(1) containing the extramembraneous catalytic core and F(0) containing the membrane proton channel, linked together by a central stalk and a peripheral stalk. During catalysis, ATP synthesis in the catalytic domain of F(1) is coupled via a rotary mechanism of the central stalk subunits to proton translocation. Component of the F(0) channel, it forms part of the peripheral stalk, linking F(1) to F(0). The b'-subunit is a diverged and duplicated form of b found in plants and photosynthetic bacteria. The chain is ATP synthase subunit b' from Picosynechococcus sp. (strain ATCC 27264 / PCC 7002 / PR-6) (Agmenellum quadruplicatum).